Consider the following 479-residue polypeptide: ATP synthase subunit beta (479 aa).

Residue 153–160 (GGAGVGKT) participates in ATP binding.

It belongs to the ATPase alpha/beta chains family. In terms of assembly, F-type ATPases have 2 components, CF(1) - the catalytic core - and CF(0) - the membrane proton channel. CF(1) has five subunits: alpha(3), beta(3), gamma(1), delta(1), epsilon(1). CF(0) has three main subunits: a(1), b(2) and c(9-12). The alpha and beta chains form an alternating ring which encloses part of the gamma chain. CF(1) is attached to CF(0) by a central stalk formed by the gamma and epsilon chains, while a peripheral stalk is formed by the delta and b chains.

It localises to the cell membrane. The enzyme catalyses ATP + H2O + 4 H(+)(in) = ADP + phosphate + 5 H(+)(out). In terms of biological role, produces ATP from ADP in the presence of a proton gradient across the membrane. The catalytic sites are hosted primarily by the beta subunits. In Lactobacillus helveticus (strain DPC 4571), this protein is ATP synthase subunit beta.